Consider the following 335-residue polypeptide: Nod factor export ATP-binding protein I (335 aa).

Positions 1 to 10 (MTQEVPRRLE) are enriched in basic and acidic residues. Positions 1 to 22 (MTQEVPRRLEPSPFEWKGDAGP) are disordered. The ABC transporter domain maps to 37–267 (IDLASVTKSY…KIGCQVIEIY (231 aa)). 69–76 (GPNGAGKS) is an ATP binding site.

Belongs to the ABC transporter superfamily. Lipooligosaccharide exporter (TC 3.A.1.102) family. In terms of assembly, the complex is composed of two ATP-binding proteins (NodI) and two transmembrane proteins (NodJ).

The protein resides in the cell inner membrane. Part of the ABC transporter complex NodIJ involved in the export of the nodulation factors (Nod factors), the bacterial signal molecules that induce symbiosis and subsequent nodulation induction. Nod factors are LCO (lipo-chitin oligosaccharide), a modified beta-1,4-linked N-acetylglucosamine oligosaccharide. This subunit is responsible for energy coupling to the transport system. The chain is Nod factor export ATP-binding protein I from Rhizobium meliloti (Ensifer meliloti).